The primary structure comprises 126 residues: Aspartate 1-decarboxylase (126 aa).

S25 serves as the catalytic Schiff-base intermediate with substrate; via pyruvic acid. Residue S25 is modified to Pyruvic acid (Ser). T57 provides a ligand contact to substrate. The active-site Proton donor is the Y58. 73 to 75 (GAA) contributes to the substrate binding site.

The protein belongs to the PanD family. In terms of assembly, heterooctamer of four alpha and four beta subunits. Pyruvate is required as a cofactor. Post-translationally, is synthesized initially as an inactive proenzyme, which is activated by self-cleavage at a specific serine bond to produce a beta-subunit with a hydroxyl group at its C-terminus and an alpha-subunit with a pyruvoyl group at its N-terminus.

Its subcellular location is the cytoplasm. The catalysed reaction is L-aspartate + H(+) = beta-alanine + CO2. It functions in the pathway cofactor biosynthesis; (R)-pantothenate biosynthesis; beta-alanine from L-aspartate: step 1/1. Catalyzes the pyruvoyl-dependent decarboxylation of aspartate to produce beta-alanine. The chain is Aspartate 1-decarboxylase from Pseudomonas fluorescens.